Reading from the N-terminus, the 239-residue chain is Purine nucleoside phosphorylase DeoD-type (239 aa).

His5 contributes to the a purine D-ribonucleoside binding site. Residues Gly21, Arg25, Arg44, and 88 to 91 (RVGS) each bind phosphate. Residues 180-182 (EME) and 204-205 (SD) each bind a purine D-ribonucleoside. Residue Asp205 is the Proton donor of the active site.

Belongs to the PNP/UDP phosphorylase family. As to quaternary structure, homohexamer; trimer of homodimers.

It carries out the reaction a purine D-ribonucleoside + phosphate = a purine nucleobase + alpha-D-ribose 1-phosphate. The enzyme catalyses a purine 2'-deoxy-D-ribonucleoside + phosphate = a purine nucleobase + 2-deoxy-alpha-D-ribose 1-phosphate. Its function is as follows. Catalyzes the reversible phosphorolytic breakdown of the N-glycosidic bond in the beta-(deoxy)ribonucleoside molecules, with the formation of the corresponding free purine bases and pentose-1-phosphate. The sequence is that of Purine nucleoside phosphorylase DeoD-type from Klebsiella pneumoniae (strain 342).